We begin with the raw amino-acid sequence, 526 residues long: Protein DETOXIFICATION 43 (526 aa).

At Met1–Glu36 the chain is on the cytoplasmic side. A helical transmembrane segment spans residues Ile37–Ile57. Over Asp58–Thr59 the chain is Extracellular. Residues Ala60 to Phe80 traverse the membrane as a helical segment. Residues Asn81–Thr170 are Cytoplasmic-facing. Positions Ile133–Arg166 are disordered. A compositionally biased stretch (polar residues) spans Ser134–Pro144. The helical transmembrane segment at Ala171–Phe191 threads the bilayer. Topologically, residues Ser192 to Tyr215 are extracellular. Residues Leu216–Phe236 traverse the membrane as a helical segment. The Cytoplasmic segment spans residues Arg237–Thr244. Residues Pro245 to Leu267 traverse the membrane as a helical segment. The Extracellular segment spans residues Arg268–Gly270. The helical transmembrane segment at Ile271–Leu293 threads the bilayer. Residues Ala294–Gly316 lie on the Cytoplasmic side of the membrane. The chain crosses the membrane as a helical span at residues Leu317 to Ala337. Over Ala338–Gln353 the chain is Extracellular. A helical membrane pass occupies residues Val354–Ala374. Over Cys375 to Gly396 the chain is Cytoplasmic. A helical transmembrane segment spans residues Phe397–Val417. Residues Phe418–His426 are Extracellular-facing. A helical transmembrane segment spans residues Leu427–Val447. Topologically, residues Leu448–Asp457 are cytoplasmic. Residues Phe458–Tyr478 form a helical membrane-spanning segment. Residues Met479–Gly484 are Extracellular-facing. The chain crosses the membrane as a helical span at residues Phe485–Ala505. Residues Arg506–Ser526 lie on the Cytoplasmic side of the membrane.

The protein belongs to the multi antimicrobial extrusion (MATE) (TC 2.A.66.1) family. In terms of tissue distribution, expressed in roots in the pericycle and cells internal to the pericycle and surrounding the vascular tissue. Also expressed in seed and flower.

The protein localises to the cell membrane. In terms of biological role, citrate transporter responsible for loading citrate into xylem tissues, which helps facilitate iron transport to shoots. Mediates the citrate release in the apoplastic spaces during plant development allowing iron nutrition between symplastically disconnected tissues. This chain is Protein DETOXIFICATION 43, found in Arabidopsis thaliana (Mouse-ear cress).